A 222-amino-acid polypeptide reads, in one-letter code: MVLFMKTVQRPEHISLKSCIPFKSLQRQGIVFRLSVRMVMLADDHSISDSALSDSDKNAFKDKNNDFWKAIKNAKNASDINFSDYSIFFAAGGHGTLFDFPSATNLHKGAAKIYSMGGVIAAVCHGPVILPCIKDSTGFSIVKGKTVTAFNEIAEQQMNLMPTFEKYHFKTLNKLFQEAGSNFVDPQEPFDDFVKTDGKLVTGANPASAASTAKAALNSLNS.

Catalysis depends on residues cysteine 124, histidine 125, and glutamate 155.

It belongs to the peptidase C56 family. HSP31-like subfamily.

The protein resides in the cytoplasm. The catalysed reaction is methylglyoxal + H2O = (R)-lactate + H(+). In terms of biological role, catalyzes the conversion of methylglyoxal (MG) to D-lactate in a single glutathione (GSH)-independent step. May play a role in detoxifying endogenously produced glyoxals. Involved in protection against reactive oxygen species (ROS). This is Probable glutathione-independent glyoxalase hsp3104 from Schizosaccharomyces pombe (strain 972 / ATCC 24843) (Fission yeast).